Consider the following 629-residue polypeptide: MEPLDALEKHGDIKKVLTEKLATLPTSPGIYQFKNSAGRIIYVGKAKNLRNRVRSYFRNSHQLFGKTLVLVSHIDDLEVIITSSEVEALILENNLIKELKPRYNVNLKDDKTYPYLVITNEPYPRILFTRHRRNDGSIAFGPYTEARQLRSILDLIGSIFPVRSCKLRLTPDAIASGKYKVCLDYHIHKCKGACEGLQPEDEYRQMIDEIIKLLKGKTSALIRSLTENMHLAATELRFEQAAEIKAQIESLKRYAERQKVVAADMVDRDVFAIAAGEDDACGVIFKIREGKLLGSQRIYINNTNGESEASMQLRMLEKFYVESIEPVPDEILLQEALSEEEEETLRAFLLVKAKNEGQEKKGIRLVVPQIGDKAHLVGMCRQNARHHLEEYLIQKQKRGEAAREHFGLTALKELLHLPTLPQRIECFDNSHFQGTDYVSSMVCFEKGKTKKSDYRKFKIKTFEGSDDYAAMDEVLRRRYSGSLTESLALPDLIVVDGGKGQVNTAYKTLQELGVTIPVIGLAKRIEEIFTPHSSDPFNLPKTSPALKLLQQLRDEAHRFAITYHRKLRSDRTLQTELTTIAGIGEKTAFKLLEHFGSVESVAQASREELQAVIGAKAGETVYTFYRPEG.

Positions 26 to 105 (TSPGIYQFKN…IKELKPRYNV (80 aa)) constitute a GIY-YIG domain. One can recognise a UVR domain in the interval 219–254 (SALIRSLTENMHLAATELRFEQAAEIKAQIESLKRY).

The protein belongs to the UvrC family. Interacts with UvrB in an incision complex.

It localises to the cytoplasm. The UvrABC repair system catalyzes the recognition and processing of DNA lesions. UvrC both incises the 5' and 3' sides of the lesion. The N-terminal half is responsible for the 3' incision and the C-terminal half is responsible for the 5' incision. The chain is UvrABC system protein C from Chlorobium chlorochromatii (strain CaD3).